Reading from the N-terminus, the 992-residue chain is Protein translocase subunit SecA (992 aa).

Residues Gln-86, 104-108 (GEGKT), and Asp-535 each bind ATP. The segment at 885–910 (IAGGSSEVEQTRKPQRRTVQQIGRND) is disordered. Zn(2+) contacts are provided by Cys-912, Cys-914, Cys-923, and His-924. The disordered stretch occupies residues 965 to 992 (IDNGTLPAASPKTPRGRQPQAVPRGKKR).

This sequence belongs to the SecA family. Monomer and homodimer. Part of the essential Sec protein translocation apparatus which comprises SecA, SecYEG and auxiliary proteins SecDF. Other proteins may also be involved. Requires Zn(2+) as cofactor.

It is found in the cell membrane. The protein localises to the cytoplasm. The enzyme catalyses ATP + H2O + cellular proteinSide 1 = ADP + phosphate + cellular proteinSide 2.. In terms of biological role, part of the Sec protein translocase complex. Interacts with the SecYEG preprotein conducting channel. Has a central role in coupling the hydrolysis of ATP to the transfer of proteins into and across the cell membrane, serving as an ATP-driven molecular motor driving the stepwise translocation of polypeptide chains across the membrane. The polypeptide is Protein translocase subunit SecA (Chloroflexus aggregans (strain MD-66 / DSM 9485)).